Reading from the N-terminus, the 230-residue chain is 2,3-bisphosphoglycerate-dependent phosphoglycerate mutase (230 aa).

Substrate is bound by residues 8–15, 21–22, Arg-60, 87–90, Lys-98, 114–115, and 183–184; these read RHGESEWN, TG, ERHY, RR, and GN. The active-site Tele-phosphohistidine intermediate is His-9. Glu-87 (proton donor/acceptor) is an active-site residue.

The protein belongs to the phosphoglycerate mutase family. BPG-dependent PGAM subfamily.

The enzyme catalyses (2R)-2-phosphoglycerate = (2R)-3-phosphoglycerate. It participates in carbohydrate degradation; glycolysis; pyruvate from D-glyceraldehyde 3-phosphate: step 3/5. Its function is as follows. Catalyzes the interconversion of 2-phosphoglycerate and 3-phosphoglycerate. The sequence is that of 2,3-bisphosphoglycerate-dependent phosphoglycerate mutase from Streptococcus pneumoniae (strain P1031).